The sequence spans 788 residues: Probable potassium transporter 9 (788 aa).

The Cytoplasmic portion of the chain corresponds to 1–21 (MDPEFGRGMAPRKREPWRTTL). A helical transmembrane segment spans residues 22-42 (LLAYQSLGVVYGDLSISPLYV). Topologically, residues 43-59 (YKSTFAEDITHSESNEE) are extracellular. Residues 60 to 80 (IFGVLSFVFWTLTLIPLIKYV) traverse the membrane as a helical segment. The Cytoplasmic portion of the chain corresponds to 81–151 (SIVLRADDNG…EKHKTLQTAL (71 aa)). Residues 152–172 (LIMVMIGTCMVIGDGVLTPAI) form a helical membrane-spanning segment. Topologically, residues 173–191 (SVFSAVSGLELSLSRDQHE) are extracellular. The chain crosses the membrane as a helical span at residues 192 to 212 (YAVIPITCVILVFLFALQHYG). Residues 213–215 (THR) are Cytoplasmic-facing. A helical transmembrane segment spans residues 216-236 (VGFLFAPIVLAWLICMSMLGL). At 237-264 (YNIIHWNPQVYRALNPYYMLKFLRKTKK) the chain is on the extracellular side. The helical transmembrane segment at 265 to 285 (SGWMSLGGILLCMTGSEAMFA) threads the bilayer. At 286-292 (DLGHFSY) the chain is on the cytoplasmic side. The helical transmembrane segment at 293–313 (SAIQLAFTTLVYPALILGYMG) threads the bilayer. Topologically, residues 314 to 343 (QAAYLSKHHTLNSTYQIGYYISVPESVRWP) are extracellular. Residue Asn325 is glycosylated (N-linked (GlcNAc...) asparagine). The chain crosses the membrane as a helical span at residues 344-364 (VLVLAILASVVGSQAIISGTF). The Cytoplasmic portion of the chain corresponds to 365-391 (SIINQSQSLSCFPRVKVVHTSENIHGQ). A helical membrane pass occupies residues 392 to 412 (IYIPEINWLLMVLCIAVTVGF). Over 413-422 (RDTKHMGNAS) the chain is Extracellular. Asn420 is a glycosylation site (N-linked (GlcNAc...) asparagine). The chain crosses the membrane as a helical span at residues 423-443 (GLAVITVMLVTTCLTSLVIML). Residues 444 to 451 (CWHRSPAL) lie on the Cytoplasmic side of the membrane. Residues 452-472 (ALVFFLFFGSIEVLYFSASLI) form a helical membrane-spanning segment. At 473-476 (KFRE) the chain is on the extracellular side. A helical membrane pass occupies residues 477–497 (GAWLPIMLALILMAVMFIWHH). Residues 498–788 (TTIKKYEFDL…LLEVGMVYVL (291 aa)) lie on the Cytoplasmic side of the membrane.

Belongs to the HAK/KUP transporter (TC 2.A.72.3) family.

Its subcellular location is the membrane. Its function is as follows. High-affinity potassium transporter. The protein is Probable potassium transporter 9 (HAK9) of Oryza sativa subsp. japonica (Rice).